The following is a 267-amino-acid chain: NAD(P)H-hydrate epimerase (267 aa).

Residues 27–242 (AQKIDEDLMS…DLEAKFDLQL (216 aa)) form the YjeF N-terminal domain. 78–82 (NQGGD) contributes to the (6S)-NADPHX binding site. Residues Gln79 and Asp142 each coordinate K(+). Residues 146 to 152 (GFNFKGD) and Asp185 contribute to the (6S)-NADPHX site. Ser188 serves as a coordination point for K(+).

This sequence belongs to the NnrE/AIBP family. K(+) serves as cofactor.

Its subcellular location is the cytoplasm. It localises to the mitochondrion. The catalysed reaction is (6R)-NADHX = (6S)-NADHX. The enzyme catalyses (6R)-NADPHX = (6S)-NADPHX. Functionally, catalyzes the epimerization of the S- and R-forms of NAD(P)HX, a damaged form of NAD(P)H that is a result of enzymatic or heat-dependent hydration. This is a prerequisite for the S-specific NAD(P)H-hydrate dehydratase to allow the repair of both epimers of NAD(P)HX. This Mycosarcoma maydis (Corn smut fungus) protein is NAD(P)H-hydrate epimerase.